Here is a 578-residue protein sequence, read N- to C-terminus: Phosphoenolpyruvate-protein phosphotransferase (578 aa).

His195 functions as the Tele-phosphohistidine intermediate in the catalytic mechanism. Arg302 and Arg338 together coordinate phosphoenolpyruvate. Glu437 and Asp461 together coordinate Mg(2+). Residues 460–461 (ND) and Arg471 contribute to the phosphoenolpyruvate site. The Proton donor role is filled by Cys508.

This sequence belongs to the PEP-utilizing enzyme family. In terms of assembly, homodimer. Requires Mg(2+) as cofactor.

It localises to the cytoplasm. It catalyses the reaction L-histidyl-[protein] + phosphoenolpyruvate = N(pros)-phospho-L-histidyl-[protein] + pyruvate. In terms of biological role, general (non sugar-specific) component of the phosphoenolpyruvate-dependent sugar phosphotransferase system (sugar PTS). This major carbohydrate active-transport system catalyzes the phosphorylation of incoming sugar substrates concomitantly with their translocation across the cell membrane. Enzyme I transfers the phosphoryl group from phosphoenolpyruvate (PEP) to the phosphoryl carrier protein (HPr). The chain is Phosphoenolpyruvate-protein phosphotransferase (ptsI) from Bacillus sp. (strain S).